The chain runs to 249 residues: Triosephosphate isomerase (249 aa).

9–11 (NWK) provides a ligand contact to substrate. Histidine 94 functions as the Electrophile in the catalytic mechanism. The Proton acceptor role is filled by glutamate 166. Residues glycine 172 and 232–233 (GG) each bind substrate.

It belongs to the triosephosphate isomerase family. In terms of assembly, homodimer.

It localises to the cytoplasm. It catalyses the reaction D-glyceraldehyde 3-phosphate = dihydroxyacetone phosphate. It participates in carbohydrate biosynthesis; gluconeogenesis. The protein operates within carbohydrate degradation; glycolysis; D-glyceraldehyde 3-phosphate from glycerone phosphate: step 1/1. Its function is as follows. Involved in the gluconeogenesis. Catalyzes stereospecifically the conversion of dihydroxyacetone phosphate (DHAP) to D-glyceraldehyde-3-phosphate (G3P). The polypeptide is Triosephosphate isomerase (Xylella fastidiosa (strain 9a5c)).